Reading from the N-terminus, the 147-residue chain is Lysozyme C (147 aa).

A signal peptide spans 1–18 (MRSLLILVLCFLPLAALG). The C-type lysozyme domain occupies 19-147 (KVFGRCELAA…VQAWIRGCRL (129 aa)). 4 disulfides stabilise this stretch: Cys-24–Cys-145, Cys-48–Cys-133, Cys-82–Cys-98, and Cys-94–Cys-112. Residues Glu-53 and Asp-70 contribute to the active site. Asp-119 contacts substrate.

Belongs to the glycosyl hydrolase 22 family. Monomer. As to expression, in the egg white and polymorphonuclear leukocytes.

It is found in the secreted. The enzyme catalyses Hydrolysis of (1-&gt;4)-beta-linkages between N-acetylmuramic acid and N-acetyl-D-glucosamine residues in a peptidoglycan and between N-acetyl-D-glucosamine residues in chitodextrins.. Lysozymes have primarily a bacteriolytic function; those in tissues and body fluids are associated with the monocyte-macrophage system and enhance the activity of immunoagents. Has bacteriolytic activity against M.luteus. The protein is Lysozyme C (LYZ) of Gallus gallus (Chicken).